The sequence spans 198 residues: dTTP/UTP pyrophosphatase (198 aa).

D75 (proton acceptor) is an active-site residue.

It belongs to the Maf family. YhdE subfamily. It depends on a divalent metal cation as a cofactor.

It localises to the cytoplasm. It carries out the reaction dTTP + H2O = dTMP + diphosphate + H(+). The catalysed reaction is UTP + H2O = UMP + diphosphate + H(+). Nucleoside triphosphate pyrophosphatase that hydrolyzes dTTP and UTP. May have a dual role in cell division arrest and in preventing the incorporation of modified nucleotides into cellular nucleic acids. In Wolbachia sp. subsp. Drosophila simulans (strain wRi), this protein is dTTP/UTP pyrophosphatase.